We begin with the raw amino-acid sequence, 156 residues long: Ribosomal RNA large subunit methyltransferase H (156 aa).

S-adenosyl-L-methionine contacts are provided by residues L73, G104, and 123 to 128 (LSDLTL).

Belongs to the RNA methyltransferase RlmH family. As to quaternary structure, homodimer.

Its subcellular location is the cytoplasm. The catalysed reaction is pseudouridine(1915) in 23S rRNA + S-adenosyl-L-methionine = N(3)-methylpseudouridine(1915) in 23S rRNA + S-adenosyl-L-homocysteine + H(+). Its function is as follows. Specifically methylates the pseudouridine at position 1915 (m3Psi1915) in 23S rRNA. This Leptothrix cholodnii (strain ATCC 51168 / LMG 8142 / SP-6) (Leptothrix discophora (strain SP-6)) protein is Ribosomal RNA large subunit methyltransferase H.